A 392-amino-acid chain; its full sequence is Flagellar P-ring protein (392 aa).

The N-terminal stretch at 1-38 (MKPFARRALLTAEPIRALLLAASLLAATLGLMPAEAFG) is a signal peptide.

This sequence belongs to the FlgI family. As to quaternary structure, the basal body constitutes a major portion of the flagellar organelle and consists of four rings (L,P,S, and M) mounted on a central rod.

It is found in the periplasm. The protein localises to the bacterial flagellum basal body. Functionally, assembles around the rod to form the L-ring and probably protects the motor/basal body from shearing forces during rotation. The protein is Flagellar P-ring protein of Paramagnetospirillum magneticum (strain ATCC 700264 / AMB-1) (Magnetospirillum magneticum).